Reading from the N-terminus, the 204-residue chain is LVSESNPGRAIPAGGKGATIRAARPGLATTLNGPKAGNGTTGATKLTTPARPLSEGANMMCDHRAGGNAAISGSSVGEGTARAGDSKVMSRMLSPKGSIIAGTVNMMPADIAAGSVRTPSSLPPDGRSATPMSVSEVASDISHKDGSVNVTKDPVTAAGLTAMRKNANKGSPPASPLPLKADNKGVHINKHWVDLKNDNDFNTR.

As to quaternary structure, multimer.

It localises to the secreted. The catalysed reaction is Eliminative cleavage of beta-D-glucopyranosyl-(1-&gt;4)-beta-D-glucopyranosyluronate bonds of gellan backbone releasing tetrasaccharides containing a 4-deoxy-4,5-unsaturated D-glucopyranosyluronic acid at the non-reducing end. The tetrasaccharide produced from deacetylated gellan is beta-D-4-deoxy-Delta(4)-GlcAp-(1-&gt;4)-beta-D-Glcp-(1-&gt;4)-alpha-L-Rhap-(1-&gt;3)-beta-D-Glcp.. With respect to regulation, activity is stimulated by zinc, potassium, lithium, cobalt, sodium, calcium, iron, manganase, magnesium and mercury ions at a concentration of 1 mM, but inhibited by copper ions at a concentration of 1 mM. Activity is inhibited by potassium, sodium and magnesium ions at a concentration of 1 M. Activity is inhibited by urea, EDTA, dithiothreitol, p-CMB, PSF, natrium lauryl sulfate and N-bromosuccinimide. Functionally, cleaves the glycosidic bonds of gellan backbone and releases tetrasaccharide units of glucuronyl-glucosyl-rhamnosyl-glucose with unsaturated glucuronic acid at the non-reducing terminal. The enzyme is highly specific to the heteropolysaccharide gellan. The chain is Gellan lyase from Geobacillus stearothermophilus (Bacillus stearothermophilus).